We begin with the raw amino-acid sequence, 428 residues long: Tyrosine--tRNA ligase (428 aa).

Tyr-41 is a binding site for L-tyrosine. A 'HIGH' region motif is present at residues 46 to 55 (PTADSLHLGH). Residues Tyr-179 and Gln-183 each coordinate L-tyrosine. The short motif at 239 to 243 (KFGKT) is the 'KMSKS' region element. Lys-242 is a binding site for ATP. An S4 RNA-binding domain is found at 361 to 418 (ADLMQALVDSELQPSRGQARKTIASNAITINGEKQSDPEYTFSDSDRLFGRYTLLRRG).

Belongs to the class-I aminoacyl-tRNA synthetase family. TyrS type 1 subfamily. As to quaternary structure, homodimer.

The protein resides in the cytoplasm. The catalysed reaction is tRNA(Tyr) + L-tyrosine + ATP = L-tyrosyl-tRNA(Tyr) + AMP + diphosphate + H(+). Its function is as follows. Catalyzes the attachment of tyrosine to tRNA(Tyr) in a two-step reaction: tyrosine is first activated by ATP to form Tyr-AMP and then transferred to the acceptor end of tRNA(Tyr). This chain is Tyrosine--tRNA ligase, found in Cronobacter sakazakii (strain ATCC BAA-894) (Enterobacter sakazakii).